Reading from the N-terminus, the 200-residue chain is Recombination protein RecR (200 aa).

The C4-type zinc finger occupies 59 to 74 (CEKCNTFTEAQICEVC). The Toprim domain occupies 82–177 (ALLCVVETPA…AVTRLARGVP (96 aa)).

Belongs to the RecR family.

May play a role in DNA repair. It seems to be involved in an RecBC-independent recombinational process of DNA repair. It may act with RecF and RecO. The chain is Recombination protein RecR from Burkholderia mallei (strain NCTC 10247).